Reading from the N-terminus, the 152-residue chain is UPF0178 protein swp_1285 (152 aa).

This sequence belongs to the UPF0178 family.

The sequence is that of UPF0178 protein swp_1285 from Shewanella piezotolerans (strain WP3 / JCM 13877).